Here is a 30-residue protein sequence, read N- to C-terminus: Cyclotide cter-G (30 aa).

The cyclopeptide (Gly-Asn) cross-link spans 1 to 30 (GLPCGESCVFIPCITTVVGCSCKNKVCYNN). Intrachain disulfides connect cysteine 4–cysteine 20, cysteine 8–cysteine 22, and cysteine 13–cysteine 27.

In terms of processing, contains 3 disulfide bonds. This is a cyclic peptide.

Probably participates in a plant defense mechanism. This chain is Cyclotide cter-G, found in Clitoria ternatea (Butterfly pea).